The sequence spans 1372 residues: DNA-directed RNA polymerase subunit beta (1372 aa).

Belongs to the RNA polymerase beta chain family. The RNAP catalytic core consists of 2 alpha, 1 beta, 1 beta' and 1 omega subunit. When a sigma factor is associated with the core the holoenzyme is formed, which can initiate transcription.

It catalyses the reaction RNA(n) + a ribonucleoside 5'-triphosphate = RNA(n+1) + diphosphate. Its function is as follows. DNA-dependent RNA polymerase catalyzes the transcription of DNA into RNA using the four ribonucleoside triphosphates as substrates. The chain is DNA-directed RNA polymerase subunit beta from Psychrobacter sp. (strain PRwf-1).